A 127-amino-acid chain; its full sequence is MIMWQSLILISSGAALGASLRWGMGLILNPLFAAFSFGTLIANYLGCFIIGLIMAMIWQHPQFSGEWRLFMITGFLGSLTTFSSFSAEVMENFIQQKWLIGLGIMSAHLFGCLIFTGIGVLITRWLN.

The next 4 membrane-spanning stretches (helical) occupy residues 7–27 (LILI…MGLI), 37–57 (FGTL…MAMI), 69–89 (LFMI…SAEV), and 102–122 (LGIM…GVLI). The Na(+) site is built by Gly-77 and Thr-80.

This sequence belongs to the fluoride channel Fluc/FEX (TC 1.A.43) family.

It localises to the cell inner membrane. The catalysed reaction is fluoride(in) = fluoride(out). Na(+) is not transported, but it plays an essential structural role and its presence is essential for fluoride channel function. In terms of biological role, fluoride-specific ion channel. Important for reducing fluoride concentration in the cell, thus reducing its toxicity. The chain is Fluoride-specific ion channel FluC from Mannheimia succiniciproducens (strain KCTC 0769BP / MBEL55E).